The following is an 875-amino-acid chain: Importin subunit beta-1 (875 aa).

Methionine 1 is subject to N-acetylmethionine. HEAT repeat units follow at residues 2–31 (ELIT…AAVE), 33–64 (LPTF…IRLL), 84–122 (ANAR…EIPV), 128–159 (LIPQ…ICQD), and 169–201 (SNEI…LNSL). Serine 12 carries the phosphoserine modification. The region spanning 21–100 (AQKFLERAAV…KNYVLQTLGT (80 aa)) is the Importin N-terminal domain. An N6-acetyllysine modification is found at lysine 210. HEAT repeat units lie at residues 211–246 (ESER…IMSL), 252–301 (ETYM…EAAE), 313–359 (YAKG…TCCE), 363–393 (VPHV…GSIL), 401–437 (LKPL…ICEL), 448–484 (LAPL…YEAA), 499–536 (SSSF…EIVK), 543–591 (YPAV…QNVL), 599–638 (ALQI…VEVL), 643–680 (LKYM…CRAL), 685–723 (LPFC…TLAI), 731–775 (LEVV…VQGL), 785–828 (DVML…CTAF), and 830–872 (KDVL…RKLK). The interval 285 to 461 (VCDEEMDLAI…LQCLIEGLSA (177 aa)) is essential for high affinity interaction with RPL23A. Residues 328–341 (TLTKQDENDDDDDW) are IAB-binding. The interval 333-418 (DENDDDDDWN…MPTLIELMKD (86 aa)) is ran-GTP binding. N6-acetyllysine is present on residues lysine 834 and lysine 866.

The protein belongs to the importin beta family. Importin beta-1 subfamily. In terms of assembly, forms a complex with an importin alpha subunit. Interacts with XPO1. Forms a heterodimer with IPO7. The KPNB1/IPO7 heterodimer interacts with H1 histone. Interacts with SNUPN. Interacts with H2A, H2B, H3 and H4 histones. Component of an import snRNP complex composed of KPNB1, SNUPN, SMN1 and ZNF259. Component of a nuclear export receptor complex composed of KPNB1, Ran, SNUPN and XPO1. Interacts with SRY. Interacts with PRKCI/atypical protein kinase C iota. Interacts with KPNA2. Interacts with KPNA7. Interacts with SNAI1 (via zinc fingers) and SNAI2 (via zinc fingers). Interacts with SLC35G1 and STIM1. Interacts with DCAF8. Interacts with RAN. Interacts with NUMA1 (via C-terminus); this interaction is inhibited by RanGTP. Interacts with ZBED1/hDREF; required for nuclear import of ZBED1/hDREF. Interacts with SRP19. Interacts with RPL23A (via BIB domain), RPS7 and RPL5. Mono-ADP-ribosylated by PARP16.

Its subcellular location is the cytoplasm. The protein resides in the nucleus envelope. In terms of biological role, functions in nuclear protein import, either in association with an adapter protein, like an importin-alpha subunit, which binds to nuclear localization signals (NLS) in cargo substrates, or by acting as autonomous nuclear transport receptor. Acting autonomously, serves itself as NLS receptor. Docking of the importin/substrate complex to the nuclear pore complex (NPC) is mediated by KPNB1 through binding to nucleoporin FxFG repeats and the complex is subsequently translocated through the pore by an energy requiring, Ran-dependent mechanism. At the nucleoplasmic side of the NPC, Ran binds to importin-beta and the three components separate and importin-alpha and -beta are re-exported from the nucleus to the cytoplasm where GTP hydrolysis releases Ran from importin. The directionality of nuclear import is thought to be conferred by an asymmetric distribution of the GTP- and GDP-bound forms of Ran between the cytoplasm and nucleus. Mediates autonomously the nuclear import of ribosomal proteins RPL23A, RPS7 and RPL5. In association with IPO7, mediates the nuclear import of H1 histone. In vitro, mediates nuclear import of H2A, H2B, H3 and H4 histones. Imports MRTFA, SNAI1 and PRKCI into the nucleus. The polypeptide is Importin subunit beta-1 (Kpnb1) (Rattus norvegicus (Rat)).